We begin with the raw amino-acid sequence, 398 residues long: Lysophospholipid acyltransferase LPEAT1 (398 aa).

The tract at residues 1 to 24 (MESELKDLNSNSNPPSSKEDRPLL) is disordered. S28 carries the post-translational modification Phosphoserine. Residues 66 to 86 (LAVALVTLVPLRFLLSMSILL) form a helical membrane-spanning segment. A disordered region spans residues 158-185 (RDSDMDSNPKTTSTEINQKGEAATEEPE). Over residues 163–174 (DSNPKTTSTEIN) the composition is skewed to polar residues. Residues 194-199 (HVSYLD) carry the HXXXXD motif motif.

Belongs to the 1-acyl-sn-glycerol-3-phosphate acyltransferase family.

Its subcellular location is the endoplasmic reticulum membrane. It catalyses the reaction a 1-acyl-sn-glycero-3-phosphoethanolamine + an acyl-CoA = a 1,2-diacyl-sn-glycero-3-phosphoethanolamine + CoA. It carries out the reaction a 1-acyl-sn-glycero-3-phosphate + an acyl-CoA = a 1,2-diacyl-sn-glycero-3-phosphate + CoA. The catalysed reaction is a 1-acyl-sn-glycero-3-phosphocholine + an acyl-CoA = a 1,2-diacyl-sn-glycero-3-phosphocholine + CoA. The enzyme catalyses a 1-acyl-sn-glycero-3-phospho-L-serine + an acyl-CoA = a 1,2-diacyl-sn-glycero-3-phospho-L-serine + CoA. It participates in lipid metabolism; phospholipid metabolism. Its function is as follows. Possesses acyl-CoA-dependent lysophospholipid acyltransferase activity with a subset of lysophospholipids as substrates. Exhibits strong acylation activity on lysophosphatidylethanolamine (LPE) and lysophosphatidate (LPA), and lower activity on lysophosphatidylcholine (LPC) and lysophosphatidylserine (LPS). Exhibits acylation activity on both LPE and LPC. Has a preference for 18:1-LPE over 16:0-LPE as acceptor. Palmitoyl-CoA (16:0-CoA) is a better acyl donor than oleoyl-CoA (18:1-CoA). Among several different acyl-CoA species the best acyl donor is palmitoyl-CoA (16:0-CoA). Activity is calcium-independent. Its activity is essential for maintaining adequate levels of phosphatidylethanolamine (PE), LPE and LPC in the cells, which is crucial for plant growth regulation. This chain is Lysophospholipid acyltransferase LPEAT1, found in Arabidopsis thaliana (Mouse-ear cress).